The following is a 449-amino-acid chain: Glucose-6-phosphate isomerase (449 aa).

Catalysis depends on Glu-291, which acts as the Proton donor. Catalysis depends on residues His-312 and Lys-426.

The protein belongs to the GPI family.

The protein resides in the cytoplasm. The enzyme catalyses alpha-D-glucose 6-phosphate = beta-D-fructose 6-phosphate. It functions in the pathway carbohydrate biosynthesis; gluconeogenesis. It participates in carbohydrate degradation; glycolysis; D-glyceraldehyde 3-phosphate and glycerone phosphate from D-glucose: step 2/4. Its function is as follows. Catalyzes the reversible isomerization of glucose-6-phosphate to fructose-6-phosphate. In Streptococcus thermophilus (strain CNRZ 1066), this protein is Glucose-6-phosphate isomerase.